Consider the following 311-residue polypeptide: Pyrimidine-specific ribonucleoside hydrolase RihA (311 aa).

The active site involves His240.

This sequence belongs to the IUNH family. RihA subfamily.

Its function is as follows. Hydrolyzes with equal efficiency cytidine or uridine to ribose and cytosine or uracil, respectively. The sequence is that of Pyrimidine-specific ribonucleoside hydrolase RihA from Escherichia coli O139:H28 (strain E24377A / ETEC).